Here is a 133-residue protein sequence, read N- to C-terminus: Small ribosomal subunit protein uS8 (133 aa).

It belongs to the universal ribosomal protein uS8 family. In terms of assembly, part of the 30S ribosomal subunit. Contacts proteins S5 and S12.

In terms of biological role, one of the primary rRNA binding proteins, it binds directly to 16S rRNA central domain where it helps coordinate assembly of the platform of the 30S subunit. This chain is Small ribosomal subunit protein uS8, found in Chlamydia abortus (strain DSM 27085 / S26/3) (Chlamydophila abortus).